We begin with the raw amino-acid sequence, 211 residues long: 3-demethoxyubiquinol 3-hydroxylase (211 aa).

Positions 60, 90, 93, 142, 174, and 177 each coordinate Fe cation.

Belongs to the COQ7 family. Fe cation is required as a cofactor.

Its subcellular location is the cell membrane. The enzyme catalyses a 5-methoxy-2-methyl-3-(all-trans-polyprenyl)benzene-1,4-diol + AH2 + O2 = a 3-demethylubiquinol + A + H2O. It participates in cofactor biosynthesis; ubiquinone biosynthesis. Its function is as follows. Catalyzes the hydroxylation of 2-nonaprenyl-3-methyl-6-methoxy-1,4-benzoquinol during ubiquinone biosynthesis. In Herminiimonas arsenicoxydans, this protein is 3-demethoxyubiquinol 3-hydroxylase.